A 77-amino-acid chain; its full sequence is Large ribosomal subunit protein uL24 (77 aa).

Residues K42 to G61 form a disordered region.

It belongs to the universal ribosomal protein uL24 family. Part of the 50S ribosomal subunit.

In terms of biological role, one of two assembly initiator proteins, it binds directly to the 5'-end of the 23S rRNA, where it nucleates assembly of the 50S subunit. One of the proteins that surrounds the polypeptide exit tunnel on the outside of the subunit. This chain is Large ribosomal subunit protein uL24, found in Lactobacillus acidophilus (strain ATCC 700396 / NCK56 / N2 / NCFM).